Consider the following 109-residue polypeptide: Tektin-3 (109 aa).

This sequence belongs to the tektin family. Microtubule inner protein component of sperm flagellar doublet microtubules. Interacts with TEKT1, TEKT2, TEKT4 and TEKT5. Interacts with CCDC38. Post-translationally, N- and O-glycosylated. In terms of processing, may be proteolytically processed during the epididymal transit of spermatozoa. Ubiquitinated, leading to its degradation. Deubiquitinated by USP16, promoting its stability.

It localises to the cytoplasm. The protein resides in the cytoskeleton. The protein localises to the cilium axoneme. It is found in the flagellum axoneme. Its subcellular location is the cytoplasmic vesicle. It localises to the secretory vesicle. The protein resides in the acrosome outer membrane. In terms of biological role, microtubule inner protein (MIP) part of the dynein-decorated doublet microtubules (DMTs) in cilia and flagellar axoneme. Forms filamentous polymers in the walls of ciliary and flagellar microtubules. Required for normal sperm mobility. In Mesocricetus auratus (Golden hamster), this protein is Tektin-3.